Consider the following 243-residue polypeptide: Asnovolin H synthase nvfL (243 aa).

The next 7 membrane-spanning stretches (helical) occupy residues 20 to 42 (ANTL…AYYS), 51 to 71 (ALIP…IHCP), 75 to 95 (FVRI…YAAI), 112 to 132 (LPFI…ALAA), 138 to 160 (IAFV…SQLL), 169 to 189 (SYVV…MVTI), and 205 to 225 (LLLW…FCFY).

It belongs to the paxB family.

The protein localises to the membrane. It carries out the reaction (3R)-[(10S)-11-epoxyfarnesyl]-2,3,5-trimethyl-6-oxido-4-oxocyclohexa-1,5-diene-1-carboxylate + H(+) = asnovolin H. It participates in secondary metabolite biosynthesis; terpenoid biosynthesis. Functionally, terpene cyclase; part of the gene cluster that mediates the biosynthesis of novofumigatonin, a heavily oxygenated meroterpenoid containing a unique orthoester moiety. The first step of the pathway is the synthesis of 3,5-dimethylorsellinic acid (DMOA) by the polyketide synthase nvfA via condensation of one acetyl-CoA starter unit with 3 malonyl-CoA units and 2 methylations. DMOA is then converted to farnesyl-DMOA by the farnesyltransferase nvfB. Epoxydation by FAD-dependent monooxygenase nvfK, followed by a protonation-initiated cyclization catalyzed by the terpene cyclase nvfL leads to the production of asnavolin H. The short chain dehydrogenase nvfC then as a 3-OH dehydrogenase of asnovolin H to yield chemesin D. There are two branches to synthesize asnovolin A from chemesin D. In one branch, chemesin D undergoes Baeyer-Villiger oxidation by nvfH, methylation by nvfJ, and enoyl reduction by the nvfM D enoylreductase that reduces the double bond between C-5'and C-6', to form respectively asnovolin I, asnovolin K, and asnovolin A. In the other branch, the methylation precedes the Baeyer-Villiger oxidation and the enoyl reduction to yield asnovolin A via the asnovolin J intermediate. Asnovolin A is further converted to fumigatonoid A by the Fe(II)/2-oxoglutarate-dependent dioxygenase nvfI that catalyzes an endoperoxidation reaction. The alpha/beta hydrolase nvfD then acts as an epimerase that converts fumigatonoid A to its C-5' epimer, which then undergoes spontaneous or nvfD-catalyzed lactonization. The following step utilizes the ketoreductase nvfG to produce fumigatonoid B. The dioxygenase nvfE further converts fumigatonoid B into fumigatonoid C. Finally the Fe(II)/2-oxoglutarate-dependent dioxygenase nvfF catalyzes two rounds of oxidation to transform fumigatonoid C into the end product, novofumigatonin A. This Aspergillus novofumigatus (strain IBT 16806) protein is Asnovolin H synthase nvfL.